Consider the following 261-residue polypeptide: Indole-3-glycerol phosphate synthase (261 aa).

Belongs to the TrpC family.

It carries out the reaction 1-(2-carboxyphenylamino)-1-deoxy-D-ribulose 5-phosphate + H(+) = (1S,2R)-1-C-(indol-3-yl)glycerol 3-phosphate + CO2 + H2O. It participates in amino-acid biosynthesis; L-tryptophan biosynthesis; L-tryptophan from chorismate: step 4/5. The polypeptide is Indole-3-glycerol phosphate synthase (Burkholderia pseudomallei (strain 1710b)).